A 426-amino-acid polypeptide reads, in one-letter code: MGLEPFSPDSTIFRDESVLRDGYQPDRLIERDTELEQYQSALKPVINGAPPKNLFLYGQTGVGKTLSSRMVVERLIEDQQNIDGVDVQVIELNCKSLNSSYQVAANLINQFRPPTEQIKPTGYPSGMIYNMLFDELEALDATHCLIVLDEIDAIGNDDDILYKLPRANDNENVEDTLVGVIGISNDFTFRDNLSARVKDSLADEEIHFPPYDANELGNILKQRAGEAFHGTSAQRLDDGSYELQSDILEGDVVPLCAAFAAQDSGSARQALKRLYKAGDLARDEESDVITGAHVRQADEIVERDKVRDELTRLPTQSKLTLYSLLLLEREDETPSKRNRIYERYVMAAKRIDADVRTDRTIHDRLSQLTLKGFLDVDEQNKGPKGGSYYEYEFSIRADLAQEVLQEDERLAELFATDETSTTLDSF.

ATP contacts are provided by residues 62-66 (VGKTL), tyrosine 211, and arginine 223.

Belongs to the CDC6/cdc18 family.

Its function is as follows. Involved in regulation of DNA replication. In Haloarcula marismortui (strain ATCC 43049 / DSM 3752 / JCM 8966 / VKM B-1809) (Halobacterium marismortui), this protein is ORC1-type DNA replication protein 1 (cdc6a).